Consider the following 102-residue polypeptide: uncharacterized protein (102 aa).

The next 2 membrane-spanning stretches (helical) occupy residues 24-44 (AFIV…PVLT) and 55-75 (IGAV…TWIL).

It localises to the cell membrane. This is an uncharacterized protein from Bacillus subtilis (strain 168).